The primary structure comprises 1372 residues: DNA-directed RNA polymerase subunit beta' (1372 aa).

Zn(2+)-binding residues include C69, C71, C84, and C87. D460, D462, and D464 together coordinate Mg(2+). Residues C808, C882, C889, and C892 each coordinate Zn(2+).

This sequence belongs to the RNA polymerase beta' chain family. In terms of assembly, the RNAP catalytic core consists of 2 alpha, 1 beta, 1 beta' and 1 omega subunit. When a sigma factor is associated with the core the holoenzyme is formed, which can initiate transcription. It depends on Mg(2+) as a cofactor. Zn(2+) serves as cofactor.

It catalyses the reaction RNA(n) + a ribonucleoside 5'-triphosphate = RNA(n+1) + diphosphate. In terms of biological role, DNA-dependent RNA polymerase catalyzes the transcription of DNA into RNA using the four ribonucleoside triphosphates as substrates. This is DNA-directed RNA polymerase subunit beta' from Rickettsia rickettsii (strain Iowa).